A 280-amino-acid polypeptide reads, in one-letter code: Ataxin-3 homolog (280 aa).

Positions 7–187 (GGMLYHEVQE…QECPMSSSSE (181 aa)) constitute a Josephin domain. Catalysis depends on Cys20, which acts as the Nucleophile. His126 (proton acceptor) is an active-site residue. Asp141 is an active-site residue. Polar residues-rich tracts occupy residues 183-194 (SSSSEASNSFGQ) and 221-232 (DNVNQQRRNQAL). The segment at 183 to 240 (SSSSEASNSFGQWLSPEDAERIRKNTSSGSSARNKRSNDNVNQQRRNQALSREEVQAF) is disordered. In terms of domain architecture, UIM spans 243 to 262 (MEDDDLKAAIAASLLDASAA).

The protein localises to the nucleus. It carries out the reaction Thiol-dependent hydrolysis of ester, thioester, amide, peptide and isopeptide bonds formed by the C-terminal Gly of ubiquitin (a 76-residue protein attached to proteins as an intracellular targeting signal).. Its function is as follows. Interacts with key regulators of transcription and represses transcription. Acts as a histone-binding protein that regulates transcription. Acts as a deubiquitinating enzyme. The chain is Ataxin-3 homolog from Arabidopsis thaliana (Mouse-ear cress).